The following is a 359-amino-acid chain: tRNA/tmRNA (uracil-C(5))-methyltransferase (359 aa).

The S-adenosyl-L-methionine site is built by Gln-183, Tyr-211, Asn-216, Glu-232, and Asp-292. Cys-317 acts as the Nucleophile in catalysis. Catalysis depends on Glu-351, which acts as the Proton acceptor.

It belongs to the class I-like SAM-binding methyltransferase superfamily. RNA M5U methyltransferase family. TrmA subfamily.

It catalyses the reaction uridine(54) in tRNA + S-adenosyl-L-methionine = 5-methyluridine(54) in tRNA + S-adenosyl-L-homocysteine + H(+). The enzyme catalyses uridine(341) in tmRNA + S-adenosyl-L-methionine = 5-methyluridine(341) in tmRNA + S-adenosyl-L-homocysteine + H(+). In terms of biological role, dual-specificity methyltransferase that catalyzes the formation of 5-methyluridine at position 54 (m5U54) in all tRNAs, and that of position 341 (m5U341) in tmRNA (transfer-mRNA). The protein is tRNA/tmRNA (uracil-C(5))-methyltransferase of Pseudomonas fluorescens (strain SBW25).